A 1425-amino-acid polypeptide reads, in one-letter code: Death-associated protein kinase dapk-1 (1425 aa).

The Protein kinase domain occupies 28–289 (YEIETELGSG…VEECLQHPWI (262 aa)). Residues 34–42 (LGSGQFAVV) and lysine 57 contribute to the ATP site. The Proton acceptor role is filled by aspartate 155. 10 ANK repeats span residues 392-421 (NGAT…NICA), 425-454 (NGDT…DVDS), 458-487 (TGET…RLDL), 491-520 (SGDT…PLHL), 524-553 (REET…PIDA), 557-586 (DGKT…DINH), 590-619 (HGDT…TVDS), 623-652 (NKKT…DVTL), 810-841 (GGYE…DPTE), and 934-963 (IGMK…ILDT). Residues 695–950 (LDTSLRRIKL…MELAKCRTNI (256 aa)) form the Roc domain. Residues 1308–1389 (ELACLLDPPH…DARDALYRTV (82 aa)) enclose the Death domain.

The protein belongs to the protein kinase superfamily. CAMK Ser/Thr protein kinase family. DAP kinase subfamily. As to quaternary structure, interacts with ptrn-1. Mg(2+) serves as cofactor. As to expression, expressed in epidermis, muscles and neurons.

It localises to the cytoplasm. It is found in the cytosol. Its subcellular location is the cytoskeleton. The catalysed reaction is L-seryl-[protein] + ATP = O-phospho-L-seryl-[protein] + ADP + H(+). It catalyses the reaction L-threonyl-[protein] + ATP = O-phospho-L-threonyl-[protein] + ADP + H(+). Negative regulator of epidermal barrier repair and innate immune responses to wounding. The role in epidermal tissue integrity and wound healing is established through the inhibition of epidermal microtubule stability, possibly via the negative regulation of the microtubule minus-end binding protein ptrn-1. In epidermis, prevents expression of specific unc-44 isoforms probably by promoting nuclear localization of pinn-1, which in turn may affect sydn-1-ssup-72-mediated regulation of alternative polyadenylation of unc-44 mRNA. Appears to act downstream of or in parallel to muscarinic signaling in the regulation of autophagy. This chain is Death-associated protein kinase dapk-1, found in Caenorhabditis elegans.